A 452-amino-acid polypeptide reads, in one-letter code: Adenosylmethionine-8-amino-7-oxononanoate aminotransferase (452 aa).

116 to 117 (GS) serves as a coordination point for pyridoxal 5'-phosphate. Tyr152 is a substrate binding site. Pyridoxal 5'-phosphate is bound at residue Asp257. Residues Lys286, Gly321, and Arg414 each coordinate substrate. Lys286 is subject to N6-(pyridoxal phosphate)lysine.

Belongs to the class-III pyridoxal-phosphate-dependent aminotransferase family. BioA subfamily. In terms of assembly, homodimer. The cofactor is pyridoxal 5'-phosphate.

It is found in the cytoplasm. It carries out the reaction (8S)-8-amino-7-oxononanoate + S-adenosyl-L-methionine = S-adenosyl-4-methylsulfanyl-2-oxobutanoate + (7R,8S)-7,8-diammoniononanoate. Its pathway is cofactor biosynthesis; biotin biosynthesis; 7,8-diaminononanoate from 8-amino-7-oxononanoate (SAM route): step 1/1. Its function is as follows. Catalyzes the transfer of the alpha-amino group from S-adenosyl-L-methionine (SAM) to 7-keto-8-aminopelargonic acid (KAPA) to form 7,8-diaminopelargonic acid (DAPA). It is the only aminotransferase known to utilize SAM as an amino donor. The polypeptide is Adenosylmethionine-8-amino-7-oxononanoate aminotransferase (Staphylococcus aureus (strain NCTC 8325 / PS 47)).